Consider the following 30-residue polypeptide: Trypsin inhibitor 2 (30 aa).

3 disulfides stabilise this stretch: Cys-3-Cys-20, Cys-10-Cys-22, and Cys-16-Cys-29.

This sequence belongs to the protease inhibitor I7 (squash-type serine protease inhibitor) family.

It is found in the secreted. In terms of biological role, inhibits trypsin. The polypeptide is Trypsin inhibitor 2 (Luffa aegyptiaca (Sponge gourd)).